Here is a 317-residue protein sequence, read N- to C-terminus: Ribonuclease Z (317 aa).

Zn(2+)-binding residues include histidine 63, histidine 65, aspartate 67, histidine 68, histidine 143, aspartate 214, and histidine 272. Aspartate 67 acts as the Proton acceptor in catalysis.

The protein belongs to the RNase Z family. Homodimer. It depends on Zn(2+) as a cofactor.

It catalyses the reaction Endonucleolytic cleavage of RNA, removing extra 3' nucleotides from tRNA precursor, generating 3' termini of tRNAs. A 3'-hydroxy group is left at the tRNA terminus and a 5'-phosphoryl group is left at the trailer molecule.. Functionally, zinc phosphodiesterase, which displays some tRNA 3'-processing endonuclease activity. Probably involved in tRNA maturation, by removing a 3'-trailer from precursor tRNA. The sequence is that of Ribonuclease Z from Ligilactobacillus salivarius (strain UCC118) (Lactobacillus salivarius).